We begin with the raw amino-acid sequence, 597 residues long: Polyphenol oxidase latent form, chloroplastic (597 aa).

Residues 1–49 (MATAPSPTTMGTYSSLISTNSFSTFLPNKSQLSLSGKSKHYVARRSSIS) constitute a chloroplast transit peptide. Residues 49 to 70 (SCKATNNNNSNNQNEQQEESSR) form a disordered region. A thylakoid-targeting transit peptide spans 50-101 (CKATNNNNSNNQNEQQEESSRLLGKLDRRNILIGLGGLYGATTLDRKPFAFA). Positions 54-63 (NNNNSNNQNE) are enriched in low complexity. 2 disulfide bridges follow: C112-C128 and C127-C189. H188, H209, H218, H341, H345, and H375 together coordinate Cu cation. Positions 192–209 (CNGAYPQVGFTDNDIQVH) form a cross-link, 2'-(S-cysteinyl)-histidine (Cys-His).

Belongs to the tyrosinase family. Monomer. Cu(2+) serves as cofactor. In terms of tissue distribution, expressed in immature-green fruit.

The protein localises to the plastid. Its subcellular location is the chloroplast thylakoid lumen. It catalyses the reaction 2 catechol + O2 = 2 1,2-benzoquinone + 2 H2O. With respect to regulation, activated in the presence of substrate at low pH. Specific activity fluctuates during fruit ripening, starting at immature-green stage, reaching a peak at the breaker stage, followed by a sharp decrease until the half-ripe stage to remain stable during the following development stages. Triggered by CuSO(4) and by low concentrations of SDS. Repressed by several inhibitors including 4-hexylresorcinol, ascorbic acid, benzoic acid, kojic acid, glutathione (reduced form), L-cysteine and sodium metabisulfite. Inhibited by various salt such as FeSO(4), KCl, NaCl, CaCl(2), MnCl(2), NiCl(2) and AlCl(3). Spontaneously activated during storage at 4 degrees Celsius. Catalyzes the oxidation of mono- and o-diphenols to o-diquinones. Uses preferentially 4-methylcatechol and chlorogenic acid as substrates, followed by caffeic acid, pyrogallol, and catechol, but barely active toward dopamine and L-dopa. No activity detected with monophenols (e.g. phenol and tyramine). This Prunus armeniaca (Apricot) protein is Polyphenol oxidase latent form, chloroplastic.